The chain runs to 50 residues: Thrombin-like enzyme BpirSP41 (50 aa).

The Peptidase S1 domain maps to 1 to 50; sequence VVGGDECDINEHPFLAFLYSHGYFCGLTLINQEWVLTAAHCDRRFMRIYL. A disulfide bridge connects residues cysteine 25 and cysteine 41. Histidine 40 serves as the catalytic Charge relay system.

Belongs to the peptidase S1 family. Snake venom subfamily. In terms of assembly, monomer. In terms of processing, N-glycosylated. As to expression, expressed by the venom gland.

The protein localises to the secreted. Inhibited by serine protease inhibitors PMSF, benzamidine, leupeptin and aprotinin, as well as by copper ions (Cu2+). Not inhibited by metalloprotease inhibitors EDTA, EGTA and 1,10-phenanthroline, as well as by barium (Ba2+) and calcium ion (Ca2+). Snake venom serine protease that interferes with the hemostatic system of the prey. It almost completely degrades both Aalpha (FGA) and Bbeta (FGB) chains of fibrinogen. It presents a higher ability to degrade fibrin clots than BpirSP27. It hydrolyzes chromogenic substrates S-2238 (used for testing thrombin activity), S-2222 (factor Xa), S-2266 (glandular kallikrein and factor XIa), and S-2302 (plasma kallikrein, factor XIa and XIIa). It shows a decrease in the clotting time of human plasma in the presence of increasing doses of the enzyme. Its minimum coagulant dose (MCD) is 20 ug. It promotes platelet aggregation with a maximum of aggregation of 20%, regardless of the concentration increase or the presence of calcium. It also shows 40% inhibition of the hemolytic activity promoted by the complement pathways and possess only a minor role in the induction of edema and pain in rat. The protein is Thrombin-like enzyme BpirSP41 of Bothrops pirajai (Piraja's lancehead).